Consider the following 184-residue polypeptide: Ribulose bisphosphate carboxylase small subunit, chloroplastic 2 (184 aa).

The transit peptide at 1-59 (MASSMMSNAATAVAVAATSGGAQANMVAPFNGLKSIASFPVTRKSNDITSIASNGGRVQ) directs the protein to the chloroplast.

This sequence belongs to the RuBisCO small chain family. Heterohexadecamer of 8 large and 8 small subunits.

The protein resides in the plastid. It is found in the chloroplast. Functionally, ruBisCO catalyzes two reactions: the carboxylation of D-ribulose 1,5-bisphosphate, the primary event in carbon dioxide fixation, as well as the oxidative fragmentation of the pentose substrate. Both reactions occur simultaneously and in competition at the same active site. Although the small subunit is not catalytic it is essential for maximal activity. The chain is Ribulose bisphosphate carboxylase small subunit, chloroplastic 2 from Amaranthus hypochondriacus (Prince-of-Wales feather).